Here is a 68-residue protein sequence, read N- to C-terminus: MSKLGVLLTICLLLFPLTAVPLDGDQPADRPAERMQDDISSERHPFFDRSKQCCHLPACRFGCTPCCW.

The N-terminal stretch at 1-19 (MSKLGVLLTICLLLFPLTA) is a signal peptide. Positions 20 to 49 (VPLDGDQPADRPAERMQDDISSERHPFFDR) are excised as a propeptide. 3 disulfides stabilise this stretch: C53-C67, C54-C63, and C59-C66. P65 carries the post-translational modification 4-hydroxyproline.

Belongs to the conotoxin M superfamily. Expressed by the venom duct.

Its subcellular location is the secreted. In Conus marmoreus (Marble cone), this protein is Conotoxin Mr3.4.